The following is a 72-amino-acid chain: Heat-stable enterotoxin A3/A4 (72 aa).

A signal peptide spans 1–19 (MKKSILFIFLSVLSFSPFA). Residues 20–53 (QDAKPVESSKEKITLESKKCNIAKKSNKSGPESM) constitute a propeptide that is removed on maturation. 3 disulfide bridges follow: C59-C64, C60-C68, and C63-C71.

It belongs to the heat-stable enterotoxin family.

It is found in the secreted. Toxin which activates the particulate form of guanylate cyclase and increases cyclic GMP levels within the host intestinal epithelial cells. This Escherichia coli protein is Heat-stable enterotoxin A3/A4 (sta3).